Reading from the N-terminus, the 891-residue chain is Receptor-like protein 50 (891 aa).

The signal sequence occupies residues 1 to 22; that stretch reads MITIIWSLCLIFCLSNSILVIA. The Extracellular portion of the chain corresponds to 23-849; that stretch reads KDLCLPDQRD…KEEKDKGLSW (827 aa). N-linked (GlcNAc...) asparagine glycans are attached at residues Asn-62 and Asn-98. LRR repeat units follow at residues 105 to 130, 132 to 152, 153 to 176, 177 to 201, 203 to 225, 226 to 249, and 250 to 272; these read QHLQ…NFKY, RVLN…LRSL, SYLT…SMGN, LKHL…LGNL, YLTD…MGNL, KSLR…LGSL, and SNLT…SMSS. N-linked (GlcNAc...) asparagine glycosylation is present at Asn-200. N-linked (GlcNAc...) asparagine glycans are attached at residues Asn-251, Asn-285, and Asn-306. LRR repeat units lie at residues 286–309, 310–334, 336–358, and 359–383; these read LSSL…NMSS, LSKL…LFML, SLIK…NISS, and PSNL…ILKL. A glycan (N-linked (GlcNAc...) asparagine) is linked at Asn-355. The LRR 12; degenerate repeat unit spans residues 384–407; that stretch reads VGLSALSLSFWDTGGIVDFSIFLQ. LRR repeat units lie at residues 408–436, 438–453, 454–477, 478–504, 506–519, 520–544, 545–568, 570–591, 593–614, 615–641, 642–665, 712–736, 737–760, 761–784, and 786–809; these read LKSL…MMHL, LSSC…LENQ, TSLY…LWRL, PTLR…IYSF, ASDN…PRAV, CEIG…EISN, KTLS…SLHG, LRSL…LINC, YLQF…WLKS, LPNL…SLSF, SKLR…YFVG, FEIY…IGIL, KELI…LSNL, SNLQ…LGEL, and FLAR…QIQS. 3 N-linked (GlcNAc...) asparagine glycosylation sites follow: Asn-422, Asn-442, and Asn-452. Residues Asn-531, Asn-544, Asn-554, Asn-590, and Asn-605 are each glycosylated (N-linked (GlcNAc...) asparagine). Asn-743 and Asn-759 each carry an N-linked (GlcNAc...) asparagine glycan. N-linked (GlcNAc...) asparagine glycans are attached at residues Asn-791 and Asn-811. The chain crosses the membrane as a helical span at residues 850-870; sequence VAAAIGYVPGLFCGLAIGHIL. The Cytoplasmic segment spans residues 871–891; the sequence is TSYKRDWFMRIFSCFSSPLKK.

This sequence belongs to the RLP family.

The protein resides in the cell membrane. This chain is Receptor-like protein 50, found in Arabidopsis thaliana (Mouse-ear cress).